Reading from the N-terminus, the 248-residue chain is DNA repair protein RecO (248 aa).

It belongs to the RecO family.

In terms of biological role, involved in DNA repair and RecF pathway recombination. This Thermoanaerobacter sp. (strain X514) protein is DNA repair protein RecO.